The sequence spans 458 residues: Argininosuccinate lyase (458 aa).

It belongs to the lyase 1 family. Argininosuccinate lyase subfamily.

Its subcellular location is the cytoplasm. It carries out the reaction 2-(N(omega)-L-arginino)succinate = fumarate + L-arginine. Its pathway is amino-acid biosynthesis; L-arginine biosynthesis; L-arginine from L-ornithine and carbamoyl phosphate: step 3/3. The chain is Argininosuccinate lyase from Lachnospira eligens (strain ATCC 27750 / DSM 3376 / VPI C15-48 / C15-B4) (Eubacterium eligens).